A 431-amino-acid chain; its full sequence is Fibrinogen C domain-containing protein 1 (431 aa).

At Met1–Cys3 the chain is on the cytoplasmic side. Residues Thr4–Leu24 form a helical; Signal-anchor for type II membrane protein membrane-spanning segment. The Extracellular segment spans residues Asn25–Arg431. The Fibrinogen C-terminal domain maps to Cys205–Arg428. A disulfide bridge connects residues Cys214 and Cys243. An N-linked (GlcNAc...) asparagine glycan is attached at Asn310. Ca(2+) is bound by residues Asp363 and Asp365. Residues Cys371 and Cys384 are joined by a disulfide bond.

As to quaternary structure, homotetramer; disulfide-linked.

The protein localises to the membrane. Functionally, acetyl group-binding receptor which shows a high-affinity and calcium-dependent binding to acetylated structures such as chitin, some N-acetylated carbohydrates, and amino acids, but not to their non-acetylated counterparts. Can facilitate the endocytosis of acetylated components. In Macaca fascicularis (Crab-eating macaque), this protein is Fibrinogen C domain-containing protein 1 (FIBCD1).